The following is a 731-amino-acid chain: Unconventional prefoldin RPB5 interactor-like protein (731 aa).

Coiled coils occupy residues 91 to 115 (RLKL…KLHT) and 143 to 176 (LAEH…LRKL). Residues 205–217 (PLKSTNESSPKSL) are compositionally biased toward polar residues. Disordered stretches follow at residues 205-224 (PLKS…EEDE), 259-302 (MSGE…EEEV), and 370-396 (ASEE…TVSE). Residues 220–258 (EEEDELWKKLEAEEQNEADELSSEAEESLKTTDNLVRQL) adopt a coiled-coil conformation. A compositionally biased stretch (acidic residues) spans 285-300 (ISEDDGDDDDEGDQEE). Coiled coils occupy residues 357–379 (DDLQ…EVVE) and 452–477 (SIKT…VKEN). Composition is skewed to polar residues over residues 508 to 518 (GAIPSPSSDQS) and 575 to 599 (SQFS…TSND). 3 disordered regions span residues 508–527 (GAIP…KPSD), 567–682 (GSAY…DLRD), and 694–731 (VEKE…LNKT). Over residues 611–621 (FYEKYEKDRAK) the composition is skewed to basic and acidic residues. A compositionally biased stretch (polar residues) spans 623-644 (SKSNSSEGDATDPESATKSILR). Residues 661–673 (KKGRKVRNQKKKE) show a composition bias toward basic residues. Over residues 721–731 (RFKEQRALNKT) the composition is skewed to basic and acidic residues.

The protein belongs to the RNA polymerase II subunit 5-mediating protein family. As to quaternary structure, interacts with serine/threonine-protein phosphatases flw/PP1beta9C and Pp1-87B with higher affinity for Pp1-87B.

The protein localises to the cytoplasm. The protein resides in the chromosome. Its subcellular location is the nucleus. Functionally, inhibits the activity of serine/threonine-protein phosphatases flw/PP1beta9C and Pp1-87B. Required for germ line cell viability and differentiation, normal transcriptional activity and maintenance of DNA integrity. This chain is Unconventional prefoldin RPB5 interactor-like protein, found in Drosophila melanogaster (Fruit fly).